Reading from the N-terminus, the 258-residue chain is Thrombin-like enzyme saxthrombin (258 aa).

An N-terminal signal peptide occupies residues 1 to 18 (MVLIRVLANLLILQLSYA). Residues 19–24 (QKSSEL) constitute a propeptide that is removed on maturation. In terms of domain architecture, Peptidase S1 spans 25 to 249 (VIGGDECNIN…YNHWIQSIIA (225 aa)). Intrachain disulfides connect Cys31–Cys163, Cys50–Cys66, Cys98–Cys256, Cys142–Cys210, Cys174–Cys189, and Cys200–Cys225. An N-linked (GlcNAc...) asparagine glycan is attached at Asn44. Catalysis depends on charge relay system residues His65 and Asp110. Residue Ser204 is the Charge relay system of the active site. Residue Asn251 is glycosylated (N-linked (GlcNAc...) asparagine).

It belongs to the peptidase S1 family. Snake venom subfamily. As to quaternary structure, monomer. Expressed by the venom gland.

The protein localises to the secreted. Thrombin-like snake venom serine protease that shows strong blood coagulation activity in vitro. The chain is Thrombin-like enzyme saxthrombin from Gloydius intermedius (Central Asian pit viper).